Reading from the N-terminus, the 375-residue chain is UDP-N-acetylglucosamine--N-acetylmuramyl-(pentapeptide) pyrophosphoryl-undecaprenol N-acetylglucosamine transferase (375 aa).

Residues 13 to 15 (TGG), Asn-124, Arg-165, Ser-193, and Gln-294 contribute to the UDP-N-acetyl-alpha-D-glucosamine site.

The protein belongs to the glycosyltransferase 28 family. MurG subfamily.

It is found in the cell inner membrane. The enzyme catalyses di-trans,octa-cis-undecaprenyl diphospho-N-acetyl-alpha-D-muramoyl-L-alanyl-D-glutamyl-meso-2,6-diaminopimeloyl-D-alanyl-D-alanine + UDP-N-acetyl-alpha-D-glucosamine = di-trans,octa-cis-undecaprenyl diphospho-[N-acetyl-alpha-D-glucosaminyl-(1-&gt;4)]-N-acetyl-alpha-D-muramoyl-L-alanyl-D-glutamyl-meso-2,6-diaminopimeloyl-D-alanyl-D-alanine + UDP + H(+). It functions in the pathway cell wall biogenesis; peptidoglycan biosynthesis. Cell wall formation. Catalyzes the transfer of a GlcNAc subunit on undecaprenyl-pyrophosphoryl-MurNAc-pentapeptide (lipid intermediate I) to form undecaprenyl-pyrophosphoryl-MurNAc-(pentapeptide)GlcNAc (lipid intermediate II). This chain is UDP-N-acetylglucosamine--N-acetylmuramyl-(pentapeptide) pyrophosphoryl-undecaprenol N-acetylglucosamine transferase, found in Chelativorans sp. (strain BNC1).